A 776-amino-acid chain; its full sequence is Hepatocyte growth factor-regulated tyrosine kinase substrate (776 aa).

Positions Ala15–Pro143 constitute a VHS domain. The FYVE-type zinc-finger motif lies at Trp160 to Asn220. Cys166, Cys169, Cys182, Cys185, Cys190, and Cys193 together coordinate Zn(2+). Residue Lys207 is modified to N6-acetyllysine. Zn(2+) contacts are provided by Cys212 and Cys215. Tyr216 is subject to Phosphotyrosine. The interval Ala223 to Ala319 is disordered. Positions Gly225–Arg542 are interaction with SNX1. In terms of domain architecture, UIM spans Gln258–Lys277. Residues Pro294 to Pro311 are compositionally biased toward low complexity. Phosphotyrosine is present on residues Tyr308, Tyr329, and Tyr334. A disordered region spans residues Lys338–Glu401. Residues Thr379–Gly398 are compositionally biased toward polar residues. Positions Ser444–Arg542 are interaction with SNAP25 and TRAK2. An interaction with STAM region spans residues Leu453–Ala571. The interaction with NF2 stretch occupies residues Ala479–Asp776. N6-succinyllysine is present on Lys550. A disordered region spans residues Gly719–Asp776. The span at Pro725–Pro743 shows a compositional bias: polar residues. Residues Thr745–Gly762 show a composition bias toward pro residues. Residues Gly767–Asp776 show a composition bias toward polar residues.

Component of the ESCRT-0 complex composed of STAM or STAM2 and HGS. Part of a complex at least composed of HSG, STAM2 (or probably STAM) and EPS15. Interacts with STAM. Interacts with STAM2. Interacts with EPS15; the interaction is direct, calcium-dependent and inhibited by SNAP25. Identified in a complex with STAM and LITAF. Found in a complex with STAM and E3 ligase ITCH and DTX3L. Interacts with E3 ligase DTX3L; the interaction brings together STAM and HSG, promotes their recruitment to early endosomes and decreases STAM and HGS ubiquitination by ITCH. Interacts with NF2; the interaction is direct. Interacts with ubiquitin; the interaction is direct. Interacts with VPS37C. Interacts with SMAD1, SMAD2 and SMAD3. Interacts with TSG101; the interaction mediates the association with the ESCRT-I complex. Interacts with SNAP25; the interaction is direct and decreases with addition of increasing concentrations of free calcium. Interacts with SNX1; the interaction is direct. Component of a 550 kDa membrane complex at least composed of HGS and SNX1 but excluding EGFR. Interacts with TRAK2. Interacts with TRAK1. Component of the CART complex, at least composed of ACTN4, HGS/HRS, MYO5B and TRIM3. Interacts (via UIM domain) with UBQLN1 (via ubiquitin-like domain). Interacts with ARRDC3. Identified in a complex containing at least ARRDC4, AVPR2 and HGS. Interacts with LAPTM4B; promotes HGS ubiquitination. Phosphorylated on Tyr-334. This phosphorylation occurs in response to EGF. A minor site of phosphorylation on Tyr-329 is detected. Protein phosphorylation may also be triggered in response to IL-2, GM-CSF and HGF. Post-translationally, ubiquitinated by ITCH. Ubiquitously expressed.

It is found in the cytoplasm. It localises to the early endosome membrane. Its subcellular location is the endosome. The protein resides in the multivesicular body membrane. Functionally, involved in intracellular signal transduction mediated by cytokines and growth factors. When associated with STAM, it suppresses DNA signaling upon stimulation by IL-2 and GM-CSF. Could be a direct effector of PI3-kinase in vesicular pathway via early endosomes and may regulate trafficking to early and late endosomes by recruiting clathrin. May concentrate ubiquitinated receptors within clathrin-coated regions. Involved in down-regulation of receptor tyrosine kinase via multivesicular body (MVBs) when complexed with STAM (ESCRT-0 complex). The ESCRT-0 complex binds ubiquitin and acts as a sorting machinery that recognizes ubiquitinated receptors and transfers them to further sequential lysosomal sorting/trafficking processes. Involved in receptor recycling via its association with the CART complex, a multiprotein complex required for efficient transferrin receptor recycling but not for EGFR degradation. May contribute to the efficient recruitment of SMADs to the activin receptor complex. This Rattus norvegicus (Rat) protein is Hepatocyte growth factor-regulated tyrosine kinase substrate (Hgs).